The sequence spans 235 residues: Endonuclease V (235 aa).

Mg(2+)-binding residues include Asp-47 and Asp-117.

This sequence belongs to the endonuclease V family. The cofactor is Mg(2+).

The protein resides in the cytoplasm. The catalysed reaction is Endonucleolytic cleavage at apurinic or apyrimidinic sites to products with a 5'-phosphate.. Its function is as follows. DNA repair enzyme involved in the repair of deaminated bases. Selectively cleaves double-stranded DNA at the second phosphodiester bond 3' to a deoxyinosine leaving behind the intact lesion on the nicked DNA. The protein is Endonuclease V of Protochlamydia amoebophila (strain UWE25).